Reading from the N-terminus, the 501-residue chain is MGYYAIFAVVLPFLWTCFYLLKLNPTSKLTSTIRLPPGPRPLPIIGNLHQLGERPHRTLANLAKVYGPIISLKFGSITTIAVSSADVAKEMFQKHDLALASRKVPAAVRANGHDNFSVAWLPVTPKWRFLRKISAIQLFSTQRLDARQSLRQAKVVELLDYIKARSNAGEPVDIGEAAFTTSLNLLSNTFFSMDLASYSSAASGEFKELVWKIMEEIGKPNLADCFPLVGFISRMSVNRELMGYGNKLNEVFAEIIEKRLSAANSSEGRGNGDVLDTLLRIMEEDDSELSLDDIMHLLMDFFTAGTDTTSSTLEWAMTELLHNPEKMAKAQAELEQVLGKDTVSIQESDIAKLLYLQATVKETLRMHPPTVFLLPRKADSDIDLYGHLVPKNAQVFVNLWAISYDPSTWENPDLFSPERFLDQDIDMKGQDFGFIPFGAGRRICPGLTLAYRMLNLMLGTLIHVFNWKLGDGLSREDLDMTDKFGITIQKAKPLRAIPILK.

The chain crosses the membrane as a helical span at residues 1 to 21 (MGYYAIFAVVLPFLWTCFYLL). Residues Asn115 and Asn264 are each glycosylated (N-linked (GlcNAc...) asparagine). Residue Cys444 coordinates heme.

Belongs to the cytochrome P450 family. The cofactor is heme. Highly expressed in aerial parts, in both skin and flesh tissues.

The protein localises to the membrane. It carries out the reaction tyramine + reduced [NADPH--hemoprotein reductase] + O2 = dopamine + oxidized [NADPH--hemoprotein reductase] + H2O + H(+). It catalyses the reaction 3-methoxytyramine + reduced [NADPH--hemoprotein reductase] + O2 = 3,4-dihydroxy-5-methoxyphenethylamine + oxidized [NADPH--hemoprotein reductase] + H2O + H(+). It functions in the pathway aromatic compound metabolism. Its pathway is alkaloid biosynthesis. Cytochrome P450 monooxygenase participating in the biosynthesis of natural products derived from phenylethylamine, including mescaline, a natural hallucinogen potentially used in psychotherapeutic treatments. Catalyzes the hydroxylation of tyramine to dopamine and of 3-methoxytyramine to 3,4-dihydroxy-5-methoxyphenethylamine. The protein is Cytochrome P450 monooxygenase 76AD131 of Lophophora williamsii (Peyote).